A 342-amino-acid polypeptide reads, in one-letter code: MSAFTPASEVLLRHSDDFEQSRILFAGDLQDDLPARFECAASRAHTQQFHHWQVLSRQMGDNVRFSLVAQACDIADCDTLIYYWPKNKPEAQFQLMNILSLMPSGADIFVVGENRSGVRSAEQMLADYAPLNKVDSARRCGLYHGRLEKQPLFSLEPYWDEYSIDGLIIKTLPGVFSRDGLDVGSQLLLSTLTPHTKGKVLDVGCGAGVLSAALASHSPKVRLTLCDVSAPAVEASRATLAVNGLDGDVFASNVFSEVKGRFDMIISNPPFHDGMQTSLDAAQTLIRSAVRHLNSGGELRIVANAFLPYPKILDETFGFHDVIAQTGRFKVYRTVMTRQAKK.

It belongs to the methyltransferase superfamily. RsmC family. Monomer.

Its subcellular location is the cytoplasm. The enzyme catalyses guanosine(1207) in 16S rRNA + S-adenosyl-L-methionine = N(2)-methylguanosine(1207) in 16S rRNA + S-adenosyl-L-homocysteine + H(+). Functionally, specifically methylates the guanine in position 1207 of 16S rRNA in the 30S particle. The sequence is that of Ribosomal RNA small subunit methyltransferase C from Salmonella arizonae (strain ATCC BAA-731 / CDC346-86 / RSK2980).